Here is a 251-residue protein sequence, read N- to C-terminus: Adenosine 5'-phosphosulfate reductase (251 aa).

The [4Fe-4S] cluster site is built by Cys121, Cys122, Cys204, and Cys207. Cys232 (nucleophile; cysteine thiosulfonate intermediate) is an active-site residue.

This sequence belongs to the PAPS reductase family. CysH subfamily. [4Fe-4S] cluster serves as cofactor.

Its subcellular location is the cytoplasm. The enzyme catalyses [thioredoxin]-disulfide + sulfite + AMP + 2 H(+) = adenosine 5'-phosphosulfate + [thioredoxin]-dithiol. Its pathway is sulfur metabolism; hydrogen sulfide biosynthesis; sulfite from sulfate. In terms of biological role, catalyzes the formation of sulfite from adenosine 5'-phosphosulfate (APS) using thioredoxin as an electron donor. The sequence is that of Adenosine 5'-phosphosulfate reductase from Sinorhizobium fredii (strain USDA 257).